Here is a 295-residue protein sequence, read N- to C-terminus: 33 kDa chaperonin (295 aa).

Cystine bridges form between C236/C238 and C269/C272.

The protein belongs to the HSP33 family. In terms of processing, under oxidizing conditions two disulfide bonds are formed involving the reactive cysteines. Under reducing conditions zinc is bound to the reactive cysteines and the protein is inactive.

The protein resides in the cytoplasm. In terms of biological role, redox regulated molecular chaperone. Protects both thermally unfolding and oxidatively damaged proteins from irreversible aggregation. Plays an important role in the bacterial defense system toward oxidative stress. This is 33 kDa chaperonin from Citrifermentans bemidjiense (strain ATCC BAA-1014 / DSM 16622 / JCM 12645 / Bem) (Geobacter bemidjiensis).